A 92-amino-acid polypeptide reads, in one-letter code: Protein S100-B (92 aa).

At serine 2 the chain carries Blocked amino end (Ser); alternate. Serine 2 carries the post-translational modification N-acetylserine; alternate. EF-hand domains lie at 13-48 (DVFHQYSGREGDKHKLKKSELKELINNELSHFLEEI) and 49-84 (KEQEVVDKVMETLDNDGDGECDFQEFMAFVAMVTTA). Histidine 16 provides a ligand contact to Zn(2+). Positions 19, 22, and 24 each coordinate Ca(2+). Histidine 26 is a Zn(2+) binding site. The Ca(2+) site is built by lysine 27, glutamate 32, aspartate 62, aspartate 64, aspartate 66, glutamate 68, and glutamate 73. Positions 86 and 91 each coordinate Zn(2+).

It belongs to the S-100 family. Dimer of either two alpha chains, or two beta chains, or one alpha and one beta chain. The S100B dimer binds two molecules of STK38. Interacts with CACYBP in a calcium-dependent manner. Interacts with ATAD3A; this interaction probably occurs in the cytosol prior to ATAD3A mitochondrial targeting. Interacts with S100A6. The S100B dimer interacts with two molecules of CAPZA1. Interacts with AGER. Interacts with PPP5C (via TPR repeats); the interaction is calcium-dependent and modulates PPP5C activity. Interacts with TPPP; this interaction inhibits TPPP dimerization. Interacts with isoform CLSTN3beta of CLSTN3; interaction promotes secretion. In terms of tissue distribution, although predominant among the water-soluble brain proteins, S100 is also found in a variety of other tissues.

It is found in the cytoplasm. It localises to the nucleus. Its subcellular location is the secreted. Small zinc- and- and calcium-binding protein that is highly expressed in astrocytes and constitutes one of the most abundant soluble proteins in brain. Weakly binds calcium but binds zinc very tightly-distinct binding sites with different affinities exist for both ions on each monomer. Physiological concentrations of potassium ion antagonize the binding of both divalent cations, especially affecting high-affinity calcium-binding sites. Acts as a neurotrophic factor that promotes astrocytosis and axonal proliferation. Involved in innervation of thermogenic adipose tissue by acting as an adipocyte-derived neurotrophic factor that promotes sympathetic innervation of adipose tissue. Binds to and initiates the activation of STK38 by releasing autoinhibitory intramolecular interactions within the kinase. Interaction with AGER after myocardial infarction may play a role in myocyte apoptosis by activating ERK1/2 and p53/TP53 signaling. Could assist ATAD3A cytoplasmic processing, preventing aggregation and favoring mitochondrial localization. May mediate calcium-dependent regulation on many physiological processes by interacting with other proteins, such as TPR-containing proteins, and modulating their activity. This chain is Protein S100-B, found in Homo sapiens (Human).